The chain runs to 299 residues: Tyrosine recombinase XerC (299 aa).

Positions 1–85 (MEQHLDAYCM…AVRGFYKYLN (85 aa)) constitute a Core-binding (CB) domain. Residues 106-285 (RLPKTLDTDR…DFQHLATVYD (180 aa)) enclose the Tyr recombinase domain. Active-site residues include R146, K170, H237, R240, and H263. Y272 serves as the catalytic O-(3'-phospho-DNA)-tyrosine intermediate.

It belongs to the 'phage' integrase family. XerC subfamily. As to quaternary structure, forms a cyclic heterotetrameric complex composed of two molecules of XerC and two molecules of XerD.

The protein resides in the cytoplasm. Functionally, site-specific tyrosine recombinase, which acts by catalyzing the cutting and rejoining of the recombining DNA molecules. The XerC-XerD complex is essential to convert dimers of the bacterial chromosome into monomers to permit their segregation at cell division. It also contributes to the segregational stability of plasmids. The chain is Tyrosine recombinase XerC from Pseudomonas savastanoi pv. phaseolicola (strain 1448A / Race 6) (Pseudomonas syringae pv. phaseolicola (strain 1448A / Race 6)).